The primary structure comprises 188 residues: Elongation factor P (188 aa).

This sequence belongs to the elongation factor P family.

It localises to the cytoplasm. It functions in the pathway protein biosynthesis; polypeptide chain elongation. Its function is as follows. Involved in peptide bond synthesis. Stimulates efficient translation and peptide-bond synthesis on native or reconstituted 70S ribosomes in vitro. Probably functions indirectly by altering the affinity of the ribosome for aminoacyl-tRNA, thus increasing their reactivity as acceptors for peptidyl transferase. The sequence is that of Elongation factor P from Rickettsia peacockii (strain Rustic).